We begin with the raw amino-acid sequence, 502 residues long: Glutamate--tRNA ligase (502 aa).

The 'HIGH' region motif lies at 21–31 (PSPTGVPHVGM). A 'KMSKS' region motif is present at residues 265–269 (KLSKR). An ATP-binding site is contributed by Lys-268.

This sequence belongs to the class-I aminoacyl-tRNA synthetase family. Glutamate--tRNA ligase type 1 subfamily. In terms of assembly, monomer.

The protein resides in the cytoplasm. The enzyme catalyses tRNA(Glu) + L-glutamate + ATP = L-glutamyl-tRNA(Glu) + AMP + diphosphate. In terms of biological role, catalyzes the attachment of glutamate to tRNA(Glu) in a two-step reaction: glutamate is first activated by ATP to form Glu-AMP and then transferred to the acceptor end of tRNA(Glu). This is Glutamate--tRNA ligase from Mycobacterium leprae (strain TN).